The chain runs to 332 residues: Nucleoid-associated protein VVA0877 (332 aa).

This sequence belongs to the YejK family.

The protein localises to the cytoplasm. Its subcellular location is the nucleoid. This chain is Nucleoid-associated protein VVA0877, found in Vibrio vulnificus (strain YJ016).